Consider the following 222-residue polypeptide: Octanoyltransferase (222 aa).

Residues 32-207 (RDRPDVLMLL…AFARVFGVQC (176 aa)) enclose the BPL/LPL catalytic domain. Substrate contacts are provided by residues 72–79 (RGGEVTYH), 139–141 (ALG), and 152–154 (GFA). Residue Cys-170 is the Acyl-thioester intermediate of the active site.

Belongs to the LipB family.

The protein resides in the cytoplasm. It catalyses the reaction octanoyl-[ACP] + L-lysyl-[protein] = N(6)-octanoyl-L-lysyl-[protein] + holo-[ACP] + H(+). The protein operates within protein modification; protein lipoylation via endogenous pathway; protein N(6)-(lipoyl)lysine from octanoyl-[acyl-carrier-protein]: step 1/2. Functionally, catalyzes the transfer of endogenously produced octanoic acid from octanoyl-acyl-carrier-protein onto the lipoyl domains of lipoate-dependent enzymes. Lipoyl-ACP can also act as a substrate although octanoyl-ACP is likely to be the physiological substrate. The polypeptide is Octanoyltransferase (Gloeobacter violaceus (strain ATCC 29082 / PCC 7421)).